A 247-amino-acid polypeptide reads, in one-letter code: MSKLFWAMLSFITRLPVPRRWSQGLDFEHYSRGIITFPLIGLLLGAISGLVFMVLQAWCGAPLAALFSVLVLVLMTGGFHLDGLADTCDGVFSARSRDRMLEIMRDSRLGTHGGLALIFVVLAKILVLSELALRGESILASLAAACAVSRGTAALLMYRHRYAREEGLGNVFIGKIDGRQTCVTLGLAAIFAAVLLPGMHGVAAMVVTMVAIFILGQLLKRTLGGQTGDTLGAAIELGELVFLLALL.

5 consecutive transmembrane segments (helical) span residues 34-54 (IITFPLIGLLLGAISGLVFMV), 59-79 (CGAPLAALFSVLVLVLMTGGF), 113-133 (GGLALIFVVLAKILVLSELAL), 138-158 (ILASLAAACAVSRGTAALLMY), and 194-214 (VLLPGMHGVAAMVVTMVAIFI).

This sequence belongs to the CobS family. The cofactor is Mg(2+).

The protein resides in the cell inner membrane. It catalyses the reaction alpha-ribazole + adenosylcob(III)inamide-GDP = adenosylcob(III)alamin + GMP + H(+). It carries out the reaction alpha-ribazole 5'-phosphate + adenosylcob(III)inamide-GDP = adenosylcob(III)alamin 5'-phosphate + GMP + H(+). It participates in cofactor biosynthesis; adenosylcobalamin biosynthesis; adenosylcobalamin from cob(II)yrinate a,c-diamide: step 7/7. In terms of biological role, joins adenosylcobinamide-GDP and alpha-ribazole to generate adenosylcobalamin (Ado-cobalamin). Also synthesizes adenosylcobalamin 5'-phosphate from adenosylcobinamide-GDP and alpha-ribazole 5'-phosphate. This Escherichia coli O81 (strain ED1a) protein is Adenosylcobinamide-GDP ribazoletransferase.